Reading from the N-terminus, the 453-residue chain is MTTDTIVAQATAPGRGGVGIIRISGDKATNVAMAVLGHLPKPRYADYCYFKSASGQVIDQGIALFFKGPNSFTGEDVLELQGHGGQIVLDMLIKRVLEVEGIRIAKPGEFSEQAFMNDKLDLTQAEAIADLIDATSEQAAKSALQSLQGEFSKEVHELVDQVTHLRLYVEAAIDFPDEEVDFLSDGKIANALYKIIDKLIAVQASAKQGSIIREGMKVVIAGRPNAGKSSLLNALAGKESAIVTEIAGTTRDVLREHIHLDGMPLHIIDTAGLRDTTDTVEQIGIERAWNEINSADRVLFMVDGTTTTAVDPHDIWPDFINRLPTNLGVTVIRNKADLTGENLEMTEEKGYSVYRISAKTGLGVDELKQHLKSLMGYQSNLEGGFIARRRHLEALEIAASHLQLGKEQLEVYLAGELLAEELRMAQLALSEITGRFTSDDLLGKIFSSFCIGK.

The (6S)-5-formyl-5,6,7,8-tetrahydrofolate site is built by R22, E79, and K119. The 162-residue stretch at G215–G376 folds into the TrmE-type G domain. N225 contributes to the K(+) binding site. Residues N225 to S230, T244 to T250, D269 to G272, and N334 to D337 each bind GTP. Residue S229 coordinates Mg(2+). Positions 244, 246, and 249 each coordinate K(+). Mg(2+) is bound at residue T250. (6S)-5-formyl-5,6,7,8-tetrahydrofolate is bound at residue K453.

The protein belongs to the TRAFAC class TrmE-Era-EngA-EngB-Septin-like GTPase superfamily. TrmE GTPase family. In terms of assembly, homodimer. Heterotetramer of two MnmE and two MnmG subunits. It depends on K(+) as a cofactor.

The protein localises to the cytoplasm. Functionally, exhibits a very high intrinsic GTPase hydrolysis rate. Involved in the addition of a carboxymethylaminomethyl (cmnm) group at the wobble position (U34) of certain tRNAs, forming tRNA-cmnm(5)s(2)U34. The polypeptide is tRNA modification GTPase MnmE (Shewanella oneidensis (strain ATCC 700550 / JCM 31522 / CIP 106686 / LMG 19005 / NCIMB 14063 / MR-1)).